A 69-amino-acid chain; its full sequence is Magnetosome protein MamI (69 aa).

Residues 1–2 (MP) are Cytoplasmic-facing. The helical transmembrane segment at 3 to 23 (SVIFGLLALAIGLLGLTAWWW) threads the bilayer. The Lumenal portion of the chain corresponds to 24–31 (SVTEFLRG). A helical membrane pass occupies residues 32-52 (AVPVALIIFGLVALAAGVQSV). The Cytoplasmic portion of the chain corresponds to 53-69 (RVPPAGKRANSDPNIDG).

The protein belongs to the magnetosome MamI protein family.

Its subcellular location is the magnetosome membrane. Functionally, may be involved in an early stage of magnetosome nucleation. Not essential for formation of magnetosome membrane vesicles, it is probably functionally redundant with other proteins. May bind magnetite. One of 7 genes (mamLQBIEMO) able to induce magnetosome membrane biogenesis; coexpression of mamLQRBIEMO in a deletion of the 17 gene mamAB operon restores magnetosome vesicle formation but not magnetite biosynthesis. The sequence is that of Magnetosome protein MamI from Magnetospirillum gryphiswaldense (strain DSM 6361 / JCM 21280 / NBRC 15271 / MSR-1).